We begin with the raw amino-acid sequence, 456 residues long: Bifunctional protein GlmU (456 aa).

Residues 1-229 (MLNNAMSVVI…LSEVEGVNNR (229 aa)) form a pyrophosphorylase region. UDP-N-acetyl-alpha-D-glucosamine is bound by residues 11-14 (LAAG), lysine 25, glutamine 76, 81-82 (GT), 103-105 (YGD), glycine 140, glutamate 154, asparagine 169, and asparagine 227. Residue aspartate 105 coordinates Mg(2+). Asparagine 227 is a Mg(2+) binding site. Positions 230-250 (LQLSRLERVYQSEQAEKLLLA) are linker. Residues 251–456 (GVMLRDPARF…EGWRRPVKKK (206 aa)) are N-acetyltransferase. The UDP-N-acetyl-alpha-D-glucosamine site is built by arginine 333 and lysine 351. Histidine 363 acts as the Proton acceptor in catalysis. Positions 366 and 377 each coordinate UDP-N-acetyl-alpha-D-glucosamine. Acetyl-CoA is bound by residues alanine 380, 386-387 (NY), serine 405, alanine 423, and arginine 440.

The protein in the N-terminal section; belongs to the N-acetylglucosamine-1-phosphate uridyltransferase family. It in the C-terminal section; belongs to the transferase hexapeptide repeat family. Homotrimer. Requires Mg(2+) as cofactor.

It localises to the cytoplasm. The catalysed reaction is alpha-D-glucosamine 1-phosphate + acetyl-CoA = N-acetyl-alpha-D-glucosamine 1-phosphate + CoA + H(+). The enzyme catalyses N-acetyl-alpha-D-glucosamine 1-phosphate + UTP + H(+) = UDP-N-acetyl-alpha-D-glucosamine + diphosphate. Its pathway is nucleotide-sugar biosynthesis; UDP-N-acetyl-alpha-D-glucosamine biosynthesis; N-acetyl-alpha-D-glucosamine 1-phosphate from alpha-D-glucosamine 6-phosphate (route II): step 2/2. It functions in the pathway nucleotide-sugar biosynthesis; UDP-N-acetyl-alpha-D-glucosamine biosynthesis; UDP-N-acetyl-alpha-D-glucosamine from N-acetyl-alpha-D-glucosamine 1-phosphate: step 1/1. The protein operates within bacterial outer membrane biogenesis; LPS lipid A biosynthesis. Catalyzes the last two sequential reactions in the de novo biosynthetic pathway for UDP-N-acetylglucosamine (UDP-GlcNAc). The C-terminal domain catalyzes the transfer of acetyl group from acetyl coenzyme A to glucosamine-1-phosphate (GlcN-1-P) to produce N-acetylglucosamine-1-phosphate (GlcNAc-1-P), which is converted into UDP-GlcNAc by the transfer of uridine 5-monophosphate (from uridine 5-triphosphate), a reaction catalyzed by the N-terminal domain. The chain is Bifunctional protein GlmU from Shigella flexneri serotype 5b (strain 8401).